Consider the following 1407-residue polypeptide: Transcription initiation factor TFIID subunit 2 (1407 aa).

Threonine 158 and threonine 161 each carry phosphothreonine. Serine 163 is modified (phosphoserine). The disordered stretch occupies residues 252-336; it reads KLIGQNGEES…EERRNIEESN (85 aa). Over residues 277–307 the composition is skewed to basic and acidic residues; it reads GKPARVIKDEDKDSNLKNDEEGKNSKSKDAQ. Residues 304 to 337 are a coiled coil; sequence KDAQDNDEEEEEGESDEEEEEGEEERRNIEESNN. The span at 308–326 shows a compositional bias: acidic residues; the sequence is DNDEEEEEGESDEEEEEGE. Serine 318 is modified (phosphoserine). The tract at residues 1285–1350 is highly charged; it reads EEGKLDIVIK…KVTSKQRKVK (66 aa).

This sequence belongs to the TAF2 family. The 1.2 MDa TFIID complex is composed of TATA binding protein (TBP) and the 14 TBP-associated factors. One copy of each TAF1, TAF2, TAF3, TAF7, TAF8, TAF11, TAF13, two copies of each TAF4, TAF5, TAF6, TAF9, TAF10, TAF12, and three copies of TAF14.

It is found in the nucleus. Functions as a component of the DNA-binding general transcription factor complex TFIID. Binding of TFIID to a promoter (with or without TATA element) is the initial step in pre-initiation complex (PIC) formation. TFIID plays a key role in the regulation of gene expression by RNA polymerase II through different activities such as transcription activator interaction, core promoter recognition and selectivity, TFIIA and TFIIB interaction, chromatin modification (histone acetylation by TAF1), facilitation of DNA opening and initiation of transcription. The chain is Transcription initiation factor TFIID subunit 2 (TAF2) from Saccharomyces cerevisiae (strain ATCC 204508 / S288c) (Baker's yeast).